Here is a 244-residue protein sequence, read N- to C-terminus: MKIDILTLFPDMFTGVFGSSILKKAQEKEAVELRVVNFRDYTTSKHNSVDDYPYGGGAGMVLTPQPIFDAVEDLTKETERKPRVVLMCPQGERFTQKKAEELAEEEHLIFVCGHYEGYDERIREHLVTDEISIGDYVLTGGELASMVITDSVVRLLPGVLGNHASQVEDSFSTGLLEHPHYTRPADFRGMKVPDVLMSGNHKNIDEWRHKESLRRTYTRRPDLLEERELSKQEKKWLEQIKEGK.

S-adenosyl-L-methionine-binding positions include Gly113 and Ile133–Leu138.

It belongs to the RNA methyltransferase TrmD family. In terms of assembly, homodimer.

It is found in the cytoplasm. The catalysed reaction is guanosine(37) in tRNA + S-adenosyl-L-methionine = N(1)-methylguanosine(37) in tRNA + S-adenosyl-L-homocysteine + H(+). Its function is as follows. Specifically methylates guanosine-37 in various tRNAs. The sequence is that of tRNA (guanine-N(1)-)-methyltransferase from Bacillus anthracis (strain A0248).